Consider the following 326-residue polypeptide: Lipoyl synthase (326 aa).

7 residues coordinate [4Fe-4S] cluster: Cys-68, Cys-73, Cys-79, Cys-94, Cys-98, Cys-101, and Ser-308. Residues 80–297 form the Radical SAM core domain; the sequence is FNHGTATFMI…KDVAMGLGFS (218 aa).

This sequence belongs to the radical SAM superfamily. Lipoyl synthase family. [4Fe-4S] cluster is required as a cofactor.

The protein localises to the cytoplasm. The enzyme catalyses [[Fe-S] cluster scaffold protein carrying a second [4Fe-4S](2+) cluster] + N(6)-octanoyl-L-lysyl-[protein] + 2 oxidized [2Fe-2S]-[ferredoxin] + 2 S-adenosyl-L-methionine + 4 H(+) = [[Fe-S] cluster scaffold protein] + N(6)-[(R)-dihydrolipoyl]-L-lysyl-[protein] + 4 Fe(3+) + 2 hydrogen sulfide + 2 5'-deoxyadenosine + 2 L-methionine + 2 reduced [2Fe-2S]-[ferredoxin]. Its pathway is protein modification; protein lipoylation via endogenous pathway; protein N(6)-(lipoyl)lysine from octanoyl-[acyl-carrier-protein]: step 2/2. Its function is as follows. Catalyzes the radical-mediated insertion of two sulfur atoms into the C-6 and C-8 positions of the octanoyl moiety bound to the lipoyl domains of lipoate-dependent enzymes, thereby converting the octanoylated domains into lipoylated derivatives. This Aeromonas salmonicida (strain A449) protein is Lipoyl synthase.